A 585-amino-acid polypeptide reads, in one-letter code: A-type ATP synthase subunit A (585 aa).

An ATP-binding site is contributed by 231 to 238; that stretch reads GPFGSGKT.

Belongs to the ATPase alpha/beta chains family. As to quaternary structure, has multiple subunits with at least A(3), B(3), C, D, E, F, H, I and proteolipid K(x).

The protein localises to the cell membrane. The enzyme catalyses ATP + H2O + 4 H(+)(in) = ADP + phosphate + 5 H(+)(out). Functionally, component of the A-type ATP synthase that produces ATP from ADP in the presence of a proton gradient across the membrane. The A chain is the catalytic subunit. This chain is A-type ATP synthase subunit A, found in Thermococcus gammatolerans (strain DSM 15229 / JCM 11827 / EJ3).